A 186-amino-acid polypeptide reads, in one-letter code: Large ribosomal subunit protein uL5c (186 aa).

Belongs to the universal ribosomal protein uL5 family. As to quaternary structure, part of the 50S ribosomal subunit; contacts the 5S rRNA.

It localises to the plastid. The protein localises to the chloroplast. Binds 5S rRNA, forms part of the central protuberance of the 50S subunit. The sequence is that of Large ribosomal subunit protein uL5c (rpl5) from Pleurastrum terricola (Filamentous green alga).